Reading from the N-terminus, the 125-residue chain is ATP synthase epsilon chain (125 aa).

Belongs to the ATPase epsilon chain family. In terms of assembly, F-type ATPases have 2 components, CF(1) - the catalytic core - and CF(0) - the membrane proton channel. CF(1) has five subunits: alpha(3), beta(3), gamma(1), delta(1), epsilon(1). CF(0) has three main subunits: a, b and c.

Its subcellular location is the cell inner membrane. In terms of biological role, produces ATP from ADP in the presence of a proton gradient across the membrane. This is ATP synthase epsilon chain from Aliarcobacter butzleri (strain RM4018) (Arcobacter butzleri).